Here is a 611-residue protein sequence, read N- to C-terminus: ANK repeat-containing protein nipk-1 (611 aa).

Positions 91 to 149 (NSKSKKKTENQETKEKDEEAEEKKDGPPKDDKELKMKKEKEQEDENAELDEQKKDGDLL) form a coiled coil. Disordered stretches follow at residues 92-167 (SKSK…SHPY), 212-255 (ISAS…DTSR), and 280-333 (TKEE…LSPR). The segment covering 97–131 (KTENQETKEKDEEAEEKKDGPPKDDKELKMKKEKE) has biased composition (basic and acidic residues). Polar residues-rich tracts occupy residues 212-223 (ISASTTPDTVLS), 239-255 (ESLQ…DTSR), and 315-333 (GTCS…LSPR). 5 ANK repeats span residues 375 to 405 (DGDT…TMNE), 417 to 446 (FGET…SPNS), 452 to 482 (VGDS…RVNE), 486 to 527 (DGQT…DPTI), and 532 to 561 (TGKT…EDTF).

The protein belongs to the iASPP family. As to expression, expressed in the nervous system.

In terms of biological role, acts downstream of the receptor complex composed of ilcr-1 and ilcr-2, which is a signaling complex that modulates neuronal activity and animal behavior in response to sensory neuron input. Mediates signaling of the complex. This chain is ANK repeat-containing protein nipk-1, found in Caenorhabditis elegans.